Reading from the N-terminus, the 400-residue chain is Nicotinate phosphoribosyltransferase (400 aa).

H220 bears the Phosphohistidine; by autocatalysis mark.

It belongs to the NAPRTase family. In terms of processing, transiently phosphorylated on a His residue during the reaction cycle. Phosphorylation strongly increases the affinity for substrates and increases the rate of nicotinate D-ribonucleotide production. Dephosphorylation regenerates the low-affinity form of the enzyme, leading to product release.

The enzyme catalyses nicotinate + 5-phospho-alpha-D-ribose 1-diphosphate + ATP + H2O = nicotinate beta-D-ribonucleotide + ADP + phosphate + diphosphate. It participates in cofactor biosynthesis; NAD(+) biosynthesis; nicotinate D-ribonucleotide from nicotinate: step 1/1. Its function is as follows. Catalyzes the synthesis of beta-nicotinate D-ribonucleotide from nicotinate and 5-phospho-D-ribose 1-phosphate at the expense of ATP. The chain is Nicotinate phosphoribosyltransferase from Escherichia coli O17:K52:H18 (strain UMN026 / ExPEC).